The following is a 238-amino-acid chain: 7-cyano-7-deazaguanine synthase (238 aa).

Residue 12–22 (FSGGQDSTTCL) coordinates ATP. Zn(2+) is bound by residues cysteine 191, cysteine 200, cysteine 203, and cysteine 206.

Belongs to the QueC family. It depends on Zn(2+) as a cofactor.

The catalysed reaction is 7-carboxy-7-deazaguanine + NH4(+) + ATP = 7-cyano-7-deazaguanine + ADP + phosphate + H2O + H(+). Its pathway is purine metabolism; 7-cyano-7-deazaguanine biosynthesis. Catalyzes the ATP-dependent conversion of 7-carboxy-7-deazaguanine (CDG) to 7-cyano-7-deazaguanine (preQ(0)). This Shewanella oneidensis (strain ATCC 700550 / JCM 31522 / CIP 106686 / LMG 19005 / NCIMB 14063 / MR-1) protein is 7-cyano-7-deazaguanine synthase.